Consider the following 466-residue polypeptide: Oxysterol-binding protein 4 (466 aa).

Polar residues predominate over residues 1–12; it reads MEIGTSSTTNNI. The disordered stretch occupies residues 1–67; that stretch reads MEIGTSSTTN…STSPPSPPIE (67 aa). Low complexity predominate over residues 24 to 45; it reads NNNNHNNNSSNNSSNNNSISSS. The span at 46–60 shows a compositional bias: polar residues; that stretch reads PTDSSQLMNGEQSTS.

Belongs to the OSBP family.

The polypeptide is Oxysterol-binding protein 4 (osbD) (Dictyostelium discoideum (Social amoeba)).